Here is a 150-residue protein sequence, read N- to C-terminus: Probable histone H2A.7 (150 aa).

Over residues 1–12 (MESTGKVKKAFG) the composition is skewed to basic residues. Disordered regions lie at residues 1-27 (MEST…SVSK) and 129-150 (KSAT…PKKA). Ser146 bears the Phosphoserine mark. The SPKK motif motif lies at 146–149 (SPKK).

It belongs to the histone H2A family. As to quaternary structure, the nucleosome is a histone octamer containing two molecules each of H2A, H2B, H3 and H4 assembled in one H3-H4 heterotetramer and two H2A-H2B heterodimers. The octamer wraps approximately 147 bp of DNA. Post-translationally, not ubiquitinated. In terms of tissue distribution, strong expression through-out the roots and leaves. Also found in meristems and dividing cells.

Its subcellular location is the nucleus. The protein localises to the chromosome. Core component of nucleosome. Nucleosomes wrap and compact DNA into chromatin, limiting DNA accessibility to the cellular machineries which require DNA as a template. Histones thereby play a central role in transcription regulation, DNA repair, DNA replication and chromosomal stability. DNA accessibility is regulated via a complex set of post-translational modifications of histones, also called histone code, and nucleosome remodeling. This chain is Probable histone H2A.7, found in Arabidopsis thaliana (Mouse-ear cress).